Reading from the N-terminus, the 327-residue chain is Microtubule-associated protein RP/EB family member 2 (327 aa).

Residues 1-17 show a composition bias toward polar residues; it reads MPGPTQTLSPNGENNND. The interval 1 to 20 is disordered; that stretch reads MPGPTQTLSPNGENNNDVIH. Residues 56–158 enclose the Calponin-homology (CH) domain; that stretch reads TMSRHDIIAW…FIQWFKKFFD (103 aa). Disordered regions lie at residues 170 to 238 and 295 to 327; these read EARQ…DKDL and LYSSEEQESHTEQHEGEEEQEHGHEEAEQQEEY. One can recognise an EB1 C-terminal domain in the interval 234-304; that stretch reads SDKDLETQVS…LYSSEEQESH (71 aa).

The protein belongs to the MAPRE family.

It localises to the cytoplasm. It is found in the cytoskeleton. Its function is as follows. May be involved in microtubule polymerization, and spindle function by stabilizing microtubules and anchoring them at centrosomes. The protein is Microtubule-associated protein RP/EB family member 2 (mapre2) of Xenopus laevis (African clawed frog).